Here is a 547-residue protein sequence, read N- to C-terminus: Probable bifunctional tRNA threonylcarbamoyladenosine biosynthesis protein (547 aa).

The tract at residues 1–329 (MGNSNELICI…FRTDMVDVNW (329 aa)) is kae1. Fe cation-binding residues include H112, H116, and Y133. L-threonylcarbamoyladenylate contacts are provided by residues 133-137 (YVSGG), D165, G178, E182, and N262. D290 contacts Fe cation. One can recognise a Protein kinase domain in the interval 346-547 (QIPRHLIGKG…KEVEKRGRYL (202 aa)). Residues 352-360 (IGKGAEADI) and K373 contribute to the ATP site. D465 acts as the Proton acceptor; for kinase activity in catalysis.

It in the N-terminal section; belongs to the KAE1 / TsaD family. In the C-terminal section; belongs to the protein kinase superfamily. Tyr protein kinase family. BUD32 subfamily. In terms of assembly, component of the KEOPS complex that consists of Kae1, Bud32, Cgi121 and Pcc1; the whole complex dimerizes. Fe(2+) serves as cofactor.

It localises to the cytoplasm. The enzyme catalyses L-seryl-[protein] + ATP = O-phospho-L-seryl-[protein] + ADP + H(+). The catalysed reaction is L-threonyl-[protein] + ATP = O-phospho-L-threonyl-[protein] + ADP + H(+). It carries out the reaction L-threonylcarbamoyladenylate + adenosine(37) in tRNA = N(6)-L-threonylcarbamoyladenosine(37) in tRNA + AMP + H(+). Required for the formation of a threonylcarbamoyl group on adenosine at position 37 (t(6)A37) in tRNAs that read codons beginning with adenine. Is a component of the KEOPS complex that is probably involved in the transfer of the threonylcarbamoyl moiety of threonylcarbamoyl-AMP (TC-AMP) to the N6 group of A37. The Kae1 domain likely plays a direct catalytic role in this reaction. The Bud32 domain probably displays kinase activity that regulates Kae1 function. This Methanococcus vannielii (strain ATCC 35089 / DSM 1224 / JCM 13029 / OCM 148 / SB) protein is Probable bifunctional tRNA threonylcarbamoyladenosine biosynthesis protein.